The chain runs to 311 residues: MALPIIIDCDPGHDDAIALVLALASPELEVKAITSSAGNQTPEKTLRNVLRMLTLLKRPDIPVAGGAVKPLMRELIIADNVHGESGLDGPALPEPSFAPQSGTAVELMAKTLRESSQPVTIVSTGPQTNVALLLNSHPELHAKIARIVIMGGAMGLGNWTPAAEFNIYVDPEAAEIVFQSGIPVVMAGLNVTHKAQIHAADIERFRAIGNPISTIVAELLDFFMEYHKDEKWGFVGAPLHDPCTIAWLLKPEIFTTVERWVGVETQGKYTQGMTVVDYYFLTGNKPNATVMVDVDRQGFVDLLAERLQYYA.

Histidine 240 is an active-site residue.

Belongs to the IUNH family. RihA subfamily.

In terms of biological role, hydrolyzes cytidine or uridine to ribose and cytosine or uracil, respectively. The sequence is that of Pyrimidine-specific ribonucleoside hydrolase RihA from Salmonella paratyphi A (strain ATCC 9150 / SARB42).